The following is a 138-amino-acid chain: Large ribosomal subunit protein uL29 (138 aa).

The tract at residues 1 to 79 (MAKSKMLDLR…TNKVIKADYN (79 aa)) is large ribosomal subunit protein uL29. A unknown region spans residues 80 to 138 (KAVEEAEKAGKEVRAKQRKFLEEQYGQQSQTKVNEADIQKAMQAAEQETVEPDTKGETK). The interval 103 to 138 (QYGQQSQTKVNEADIQKAMQAAEQETVEPDTKGETK) is disordered.

The protein belongs to the universal ribosomal protein uL29 family.

The protein is Large ribosomal subunit protein uL29 of Mycoplasma capricolum subsp. capricolum (strain California kid / ATCC 27343 / NCTC 10154).